The primary structure comprises 680 residues: tRNA 5-methylaminomethyl-2-thiouridine biosynthesis bifunctional protein MnmC (680 aa).

The tract at residues 1–245 (MSHPPIQTAT…KREMLTGILP (245 aa)) is tRNA (mnm(5)s(2)U34)-methyltransferase. The segment at 270-680 (IGGGIVSALT…PVQQRVSVLS (411 aa)) is FAD-dependent cmnm(5)s(2)U34 oxidoreductase.

This sequence in the N-terminal section; belongs to the methyltransferase superfamily. tRNA (mnm(5)s(2)U34)-methyltransferase family. The protein in the C-terminal section; belongs to the DAO family. The cofactor is FAD.

The protein localises to the cytoplasm. It catalyses the reaction 5-aminomethyl-2-thiouridine(34) in tRNA + S-adenosyl-L-methionine = 5-methylaminomethyl-2-thiouridine(34) in tRNA + S-adenosyl-L-homocysteine + H(+). Catalyzes the last two steps in the biosynthesis of 5-methylaminomethyl-2-thiouridine (mnm(5)s(2)U) at the wobble position (U34) in tRNA. Catalyzes the FAD-dependent demodification of cmnm(5)s(2)U34 to nm(5)s(2)U34, followed by the transfer of a methyl group from S-adenosyl-L-methionine to nm(5)s(2)U34, to form mnm(5)s(2)U34. This is tRNA 5-methylaminomethyl-2-thiouridine biosynthesis bifunctional protein MnmC from Yersinia enterocolitica serotype O:8 / biotype 1B (strain NCTC 13174 / 8081).